Consider the following 149-residue polypeptide: Large ribosomal subunit protein uL16 (149 aa).

This sequence belongs to the universal ribosomal protein uL16 family. In terms of assembly, part of the 50S ribosomal subunit.

Its function is as follows. Binds 23S rRNA and is also seen to make contacts with the A and possibly P site tRNAs. The polypeptide is Large ribosomal subunit protein uL16 (Dehalococcoides mccartyi (strain ATCC BAA-2100 / JCM 16839 / KCTC 5957 / BAV1)).